The following is a 254-amino-acid chain: Sugar fermentation stimulation protein homolog (254 aa).

Belongs to the SfsA family.

In Parasynechococcus marenigrum (strain WH8102), this protein is Sugar fermentation stimulation protein homolog.